The following is a 392-amino-acid chain: Large ribosomal subunit protein uL3 (392 aa).

It belongs to the universal ribosomal protein uL3 family.

It is found in the cytoplasm. In terms of biological role, the L3 protein is a component of the large subunit of cytoplasmic ribosomes. In Aspergillus fumigatus (strain ATCC MYA-4609 / CBS 101355 / FGSC A1100 / Af293) (Neosartorya fumigata), this protein is Large ribosomal subunit protein uL3 (rpl3).